We begin with the raw amino-acid sequence, 109 residues long: Spermidine export protein MdtI (109 aa).

Transmembrane regions (helical) follow at residues 6 to 26, 36 to 56, 64 to 84, and 88 to 108; these read WVHA…NVFL, IFGL…SQAV, AYAL…WILF, and LNRK…MVKL.

It belongs to the drug/metabolite transporter (DMT) superfamily. Small multidrug resistance (SMR) (TC 2.A.7.1) family. MdtI subfamily. Forms a complex with MdtJ.

The protein localises to the cell inner membrane. In terms of biological role, catalyzes the excretion of spermidine. In Shigella dysenteriae serotype 1 (strain Sd197), this protein is Spermidine export protein MdtI.